A 684-amino-acid polypeptide reads, in one-letter code: Actin-related protein 5 (684 aa).

The stretch at 262–469 (KEKSVIIQLP…ARQKQKQKAN (208 aa)) forms a coiled coil. 2 disordered regions span residues 392–443 (KEKK…PEHY) and 481–500 (VNPTNHGNYGEKGEEVEDPE). The span at 402-443 (SMKDGRLAQKRKRDEEKEKEKEKEEERDRQEEESFLKDPEHY) shows a compositional bias: basic and acidic residues.

This sequence belongs to the actin family. ARP5 subfamily. Component of the chromatin-remodeling Ino80 complex.

It localises to the nucleus. Proposed core component of the chromatin remodeling Ino80 complex which is involved in transcriptional regulation, DNA replication and probably DNA repair. In Dictyostelium discoideum (Social amoeba), this protein is Actin-related protein 5 (arpE).